The sequence spans 335 residues: uncharacterized protein (335 aa).

The next 4 helical transmembrane spans lie at F104 to L124, L128 to F148, L280 to G300, and T310 to V330.

The protein localises to the cell membrane. This is an uncharacterized protein from Methanocaldococcus jannaschii (strain ATCC 43067 / DSM 2661 / JAL-1 / JCM 10045 / NBRC 100440) (Methanococcus jannaschii).